A 786-amino-acid chain; its full sequence is Zinc finger transcription factor YRM1 (786 aa).

The disordered stretch occupies residues 1 to 25; it reads MSKRGSLQDRASPSEETVKKAQKRR. The segment at residues 31–59 is a DNA-binding region (zn(2)-C6 fungal-type); that stretch reads CAFCRKRKLRCDQQKPMCSTCKTRGRSGC. Positions 721–747 are disordered; it reads PLAGNSPGLPPEEVRNNSENASHNNET. The span at 737–747 shows a compositional bias: polar residues; that stretch reads NSENASHNNET.

The protein resides in the cytoplasm. It is found in the nucleus. Transcription factor involved in the regulation of multidrug resistance genes. Acts in concert with YRR1. The protein is Zinc finger transcription factor YRM1 (YRM1) of Saccharomyces cerevisiae (strain ATCC 204508 / S288c) (Baker's yeast).